A 643-amino-acid chain; its full sequence is Threonine--tRNA ligase (643 aa).

The TGS domain occupies 1–61; it reads MIKITLKDGS…NEDSSLEICT (61 aa). Residues 240–540 form a catalytic region; the sequence is DHNKLGRELG…LIEKYAGALP (301 aa). Zn(2+) contacts are provided by Cys-335, His-386, and His-517.

The protein belongs to the class-II aminoacyl-tRNA synthetase family. Homodimer. The cofactor is Zn(2+).

The protein localises to the cytoplasm. The enzyme catalyses tRNA(Thr) + L-threonine + ATP = L-threonyl-tRNA(Thr) + AMP + diphosphate + H(+). Catalyzes the attachment of threonine to tRNA(Thr) in a two-step reaction: L-threonine is first activated by ATP to form Thr-AMP and then transferred to the acceptor end of tRNA(Thr). Also edits incorrectly charged L-seryl-tRNA(Thr). The chain is Threonine--tRNA ligase from Clostridium perfringens (strain SM101 / Type A).